Reading from the N-terminus, the 421-residue chain is 3-isopropylmalate dehydratase large subunit (421 aa).

[4Fe-4S] cluster-binding residues include C300, C360, and C363.

It belongs to the aconitase/IPM isomerase family. LeuC type 2 subfamily. Heterodimer of LeuC and LeuD. [4Fe-4S] cluster serves as cofactor.

It catalyses the reaction (2R,3S)-3-isopropylmalate = (2S)-2-isopropylmalate. The protein operates within amino-acid biosynthesis; L-leucine biosynthesis; L-leucine from 3-methyl-2-oxobutanoate: step 2/4. In terms of biological role, catalyzes the isomerization between 2-isopropylmalate and 3-isopropylmalate, via the formation of 2-isopropylmaleate. The protein is 3-isopropylmalate dehydratase large subunit of Thermodesulfovibrio yellowstonii (strain ATCC 51303 / DSM 11347 / YP87).